Reading from the N-terminus, the 410-residue chain is Structure-specific endonuclease subunit SLX1 homolog (410 aa).

The 84-residue stretch at 6-89 folds into the GIY-YIG domain; that stretch reads QLHYCYFLLS…NICKVTRDNI (84 aa).

This sequence belongs to the SLX1 family. In terms of assembly, forms a heterodimer with a member of the SLX4 family. The cofactor is a divalent metal cation.

Its subcellular location is the nucleus. Functionally, catalytic subunit of a heterodimeric structure-specific endonuclease that resolves DNA secondary structures generated during DNA repair and recombination. Has endonuclease activity towards branched DNA substrates, introducing single-strand cuts in duplex DNA close to junctions with ss-DNA. This is Structure-specific endonuclease subunit SLX1 homolog from Cryptosporidium parvum (strain Iowa II).